Here is a 272-residue protein sequence, read N- to C-terminus: Insulin-like growth factor-binding protein 1 (272 aa).

The signal sequence occupies residues 1–25 (MPEFLTVVSWPFLILLSFQIGVAAG). One can recognise an IGFBP N-terminal domain in the interval 28–109 (QPWHCAPCTA…TRGQGACVPE (82 aa)). 6 disulfide bridges follow: Cys-32–Cys-59, Cys-35–Cys-61, Cys-43–Cys-62, Cys-50–Cys-65, Cys-73–Cys-86, and Cys-80–Cys-106. 3 positions are modified to phosphoserine: Ser-139, Ser-157, and Ser-169. A Phosphothreonine modification is found at Thr-170. Phosphotyrosine is present on Tyr-171. A Thyroglobulin type-1 domain is found at 186–264 (KEPCQRELYK…SLETRGDPNC (79 aa)). Intrachain disulfides connect Cys-189-Cys-219, Cys-230-Cys-241, and Cys-243-Cys-264. The residue at position 255 (Ser-255) is a Phosphoserine. The Cell attachment site signature appears at 259–261 (RGD).

In terms of assembly, binds equally well IGF1 and IGF2. Interacts with integrin ITGA5:ITGB1. Interacts with VHL; this interaction inhibits HIF1A degradation.

It is found in the secreted. Its function is as follows. Multifunctional protein that plays a critical role in regulating the availability of IGFs such as IGF1 and IGF2 to their receptors and thereby regulates IGF-mediated cellular processes including cell migration, proliferation, differentiation or apoptosis in a cell-type specific manner. Also plays a positive role in cell migration by interacting with integrin ITGA5:ITGB1 through its RGD motif. Mechanistically, binding to integrins leads to activation of focal adhesion kinase/PTK2 and stimulation of the mitogen-activated protein kinase (MAPK) pathway. Regulates cardiomyocyte apoptosis by suppressing HIF-1alpha/HIF1A ubiquitination and subsequent degradation. The polypeptide is Insulin-like growth factor-binding protein 1 (Igfbp1) (Mus musculus (Mouse)).